A 519-amino-acid polypeptide reads, in one-letter code: Protein nucleotidyltransferase YdiU (519 aa).

ATP-binding residues include G101, G103, R104, K124, D136, G137, R194, and R201. D271 serves as the catalytic Proton acceptor. Residues N272 and D281 each coordinate Mg(2+). D281 serves as a coordination point for ATP.

It belongs to the SELO family. It depends on Mg(2+) as a cofactor. Requires Mn(2+) as cofactor.

It carries out the reaction L-seryl-[protein] + ATP = 3-O-(5'-adenylyl)-L-seryl-[protein] + diphosphate. It catalyses the reaction L-threonyl-[protein] + ATP = 3-O-(5'-adenylyl)-L-threonyl-[protein] + diphosphate. The catalysed reaction is L-tyrosyl-[protein] + ATP = O-(5'-adenylyl)-L-tyrosyl-[protein] + diphosphate. The enzyme catalyses L-histidyl-[protein] + UTP = N(tele)-(5'-uridylyl)-L-histidyl-[protein] + diphosphate. It carries out the reaction L-seryl-[protein] + UTP = O-(5'-uridylyl)-L-seryl-[protein] + diphosphate. It catalyses the reaction L-tyrosyl-[protein] + UTP = O-(5'-uridylyl)-L-tyrosyl-[protein] + diphosphate. Its function is as follows. Nucleotidyltransferase involved in the post-translational modification of proteins. It can catalyze the addition of adenosine monophosphate (AMP) or uridine monophosphate (UMP) to a protein, resulting in modifications known as AMPylation and UMPylation. This is Protein nucleotidyltransferase YdiU from Azoarcus sp. (strain BH72).